Here is a 1872-residue protein sequence, read N- to C-terminus: Ral GTPase-activating protein subunit alpha-2 (1872 aa).

Residues Asp350–Arg370 form a disordered region. Residues Ser373, Ser376, and Ser379 each carry the phosphoserine modification. Residues Pro445 to Ser469 are compositionally biased toward basic and acidic residues. Positions Pro445–Trp481 are disordered. Residue Ser486 is modified to Phosphoserine. Ser696 is modified (phosphoserine; by PKB). Disordered stretches follow at residues Phe711–Arg730 and Gln758–Met813. Thr715 is subject to Phosphothreonine; by PKB. 2 stretches are compositionally biased toward polar residues: residues Gln758–Asp768 and Ser775–Lys795. Residues Ser796–Gly810 are compositionally biased toward basic and acidic residues. Phosphoserine occurs at positions 819 and 820. A disordered region spans residues Gln831 to Val851. Positions Arg840–Asp849 are enriched in polar residues. Ser1592 carries the post-translational modification Phosphoserine. The Rap-GAP domain occupies Leu1634–Ile1842.

In terms of assembly, component of the heterodimeric RalGAP2 complex with RALGAPB. Heterodimerization is required for activity. In terms of tissue distribution, abundantly expressed in testis, pancreas, lung, thymus, brown fat, and white fat.

Its subcellular location is the cytoplasm. Catalytic subunit of the heterodimeric RalGAP2 complex which acts as a GTPase activator for the Ras-like small GTPases RALA and RALB. This chain is Ral GTPase-activating protein subunit alpha-2 (Ralgapa2), found in Mus musculus (Mouse).